The following is a 232-amino-acid chain: Orotate phosphoribosyltransferase (232 aa).

Residues R107, K108, K111, and 133–141 (EDLTTDGGS) contribute to the 5-phospho-alpha-D-ribose 1-diphosphate site. Position 137 (T137) interacts with orotate.

The protein belongs to the purine/pyrimidine phosphoribosyltransferase family. PyrE subfamily. As to quaternary structure, homodimer. The cofactor is Mg(2+).

The catalysed reaction is orotidine 5'-phosphate + diphosphate = orotate + 5-phospho-alpha-D-ribose 1-diphosphate. Its pathway is pyrimidine metabolism; UMP biosynthesis via de novo pathway; UMP from orotate: step 1/2. Catalyzes the transfer of a ribosyl phosphate group from 5-phosphoribose 1-diphosphate to orotate, leading to the formation of orotidine monophosphate (OMP). This Cereibacter sphaeroides (strain ATCC 17029 / ATH 2.4.9) (Rhodobacter sphaeroides) protein is Orotate phosphoribosyltransferase.